Reading from the N-terminus, the 91-residue chain is Cytochrome c-554(547) (91 aa).

Heme c is bound by residues C15, C18, H19, and M64.

Monomer. In terms of processing, binds 1 heme c group covalently per subunit.

This is Cytochrome c-554(547) from Halothiobacillus neapolitanus (Thiobacillus neapolitanus).